Here is a 445-residue protein sequence, read N- to C-terminus: Phosphoglucosamine mutase (445 aa).

Serine 99 acts as the Phosphoserine intermediate in catalysis. Positions 99, 242, 244, and 246 each coordinate Mg(2+). At serine 99 the chain carries Phosphoserine.

It belongs to the phosphohexose mutase family. It depends on Mg(2+) as a cofactor. Post-translationally, activated by phosphorylation.

The catalysed reaction is alpha-D-glucosamine 1-phosphate = D-glucosamine 6-phosphate. Catalyzes the conversion of glucosamine-6-phosphate to glucosamine-1-phosphate. In Campylobacter jejuni (strain RM1221), this protein is Phosphoglucosamine mutase.